The primary structure comprises 1793 residues: Chitin synthase 5 (1793 aa).

Residues 1–28 (MTNPRMSMYSLASEAPGGNRGTGQQSTQ) form a disordered region. N70, N164, N638, N664, and N669 each carry an N-linked (GlcNAc...) asparagine glycan. 2 consecutive transmembrane segments (helical) span residues 750-770 (VWVFIVWAFTWWIPSPLLRYV) and 786-806 (LVLCFFIFLMNALIVFWIVAF). A Cytochrome b5 heme-binding domain is found at 815–877 (DKAYSQKEVD…GMNLDDYFVA (63 aa)). N-linked (GlcNAc...) asparagine glycosylation is found at N897, N1019, and N1023. The helical transmembrane segment at 1056–1076 (LLLAFSIMLCAVILLKFVSAL) threads the bilayer. A glycan (N-linked (GlcNAc...) asparagine) is linked at N1421. A run of 3 helical transmembrane segments spans residues 1452–1472 (LFGTIILPATCVYLGYLIYLV), 1479–1499 (FPLISIIMLAAVYGLQALIFI), and 1507–1527 (IGWMIIYILAFPIYSFVLPIY). N-linked (GlcNAc...) asparagine glycosylation is found at N1534 and N1705. One can recognise a DEK-C domain in the interval 1735–1791 (GPDDGMIVEAIRTVLMEVDLDTVTKKQVRALVEQRLQSELVGERRTFMDRQIDHELA).

This sequence belongs to the chitin synthase family. Class V subfamily.

The protein localises to the cell membrane. It catalyses the reaction [(1-&gt;4)-N-acetyl-beta-D-glucosaminyl](n) + UDP-N-acetyl-alpha-D-glucosamine = [(1-&gt;4)-N-acetyl-beta-D-glucosaminyl](n+1) + UDP + H(+). In terms of biological role, polymerizes chitin, a structural polymer of the cell wall and septum, by transferring the sugar moiety of UDP-GlcNAc to the non-reducing end of the growing chitin polymer. Regulates Germination and Tolerance to Hyperosmotic Stress. Plays a key role in pathogenicity. Likely contributes to post-penetration virulence. The sequence is that of Chitin synthase 5 from Verticillium dahliae (strain VdLs.17 / ATCC MYA-4575 / FGSC 10137) (Verticillium wilt).